Here is a 108-residue protein sequence, read N- to C-terminus: Large ribosomal subunit protein bL31B (108 aa).

Residues 85 to 108 (PKPETSVEEVLPKGKKKAPAKKKK) form a disordered region. The segment covering 97-108 (KGKKKAPAKKKK) has biased composition (basic residues).

The protein belongs to the bacterial ribosomal protein bL31 family. Type B subfamily. As to quaternary structure, part of the 50S ribosomal subunit.

In Chlamydia muridarum (strain MoPn / Nigg), this protein is Large ribosomal subunit protein bL31B.